Here is a 261-residue protein sequence, read N- to C-terminus: MLDKVKNVIVVLSGKGGVGKSTVSTQLALALRHTGHKVGLLDIDLCGPSVPYLLGLEGSDIYQCDDGWVPIYTDESKTLAVMSIGFLLKSRTDPVIWRGPKKTMMIKQFLQDVKWDELDYLIIDTPPGTSDEHITVMECLREVPCNGAIIVTTPQGVALDDVRKEITFCKKTGIKLLGIVENMSGFVCPHCTTCTNIFSSNGGIELANLAQIPHLGTLPIDPRVGILAGTTASVLSELPESSTAEVLKGLVQHLDTLTAQG.

Residue 14–21 (GKGGVGKS) participates in ATP binding. Cysteine 188 and cysteine 191 together coordinate [4Fe-4S] cluster.

The protein belongs to the Mrp/NBP35 ATP-binding proteins family. NUBP2/CFD1 subfamily. In terms of assembly, heterotetramer of 2 Nubp1 and 2 Nubp2 chains. It depends on [4Fe-4S] cluster as a cofactor.

Its subcellular location is the cytoplasm. Its function is as follows. Component of the cytosolic iron-sulfur (Fe/S) protein assembly (CIA) machinery. Required for maturation of extramitochondrial Fe-S proteins. The Nubp1-Nubp2 heterotetramer forms a Fe-S scaffold complex, mediating the de novo assembly of an Fe-S cluster and its transfer to target apoproteins. This is Cytosolic Fe-S cluster assembly factor Nubp2 homolog from Drosophila willistoni (Fruit fly).